We begin with the raw amino-acid sequence, 134 residues long: Large ribosomal subunit protein uL16c (134 aa).

Residues 1–21 (MLSPKRTKYRKHHRGRMRGKA) are disordered.

This sequence belongs to the universal ribosomal protein uL16 family. In terms of assembly, part of the 50S ribosomal subunit.

Its subcellular location is the plastid. The protein localises to the chloroplast. This is Large ribosomal subunit protein uL16c from Chlorella vulgaris (Green alga).